We begin with the raw amino-acid sequence, 209 residues long: Large ribosomal subunit protein uL3 (209 aa).

N5-methylglutamine is present on Q150.

Belongs to the universal ribosomal protein uL3 family. As to quaternary structure, part of the 50S ribosomal subunit. Forms a cluster with proteins L14 and L19. Post-translationally, methylated by PrmB.

In terms of biological role, one of the primary rRNA binding proteins, it binds directly near the 3'-end of the 23S rRNA, where it nucleates assembly of the 50S subunit. This chain is Large ribosomal subunit protein uL3, found in Citrobacter koseri (strain ATCC BAA-895 / CDC 4225-83 / SGSC4696).